The chain runs to 377 residues: Glutamate 5-kinase (377 aa).

Lysine 18 is an ATP binding site. Positions 55, 142, and 154 each coordinate substrate. Residues 174–175 and 216–222 contribute to the ATP site; these read SD and TGGMKSK. The PUA domain occupies 281–359; the sequence is QGEVVVDAGA…REIEALLGYK (79 aa).

It belongs to the glutamate 5-kinase family.

The protein localises to the cytoplasm. It carries out the reaction L-glutamate + ATP = L-glutamyl 5-phosphate + ADP. The protein operates within amino-acid biosynthesis; L-proline biosynthesis; L-glutamate 5-semialdehyde from L-glutamate: step 1/2. Functionally, catalyzes the transfer of a phosphate group to glutamate to form L-glutamate 5-phosphate. The protein is Glutamate 5-kinase of Meiothermus ruber.